A 365-amino-acid chain; its full sequence is Peptide chain release factor 2 (365 aa).

Gln-251 bears the N5-methylglutamine mark.

The protein belongs to the prokaryotic/mitochondrial release factor family. Post-translationally, methylated by PrmC. Methylation increases the termination efficiency of RF2.

The protein localises to the cytoplasm. Functionally, peptide chain release factor 2 directs the termination of translation in response to the peptide chain termination codons UGA and UAA. The protein is Peptide chain release factor 2 of Campylobacter jejuni subsp. jejuni serotype O:2 (strain ATCC 700819 / NCTC 11168).